The sequence spans 222 residues: UPF0502 protein XAC4278 (222 aa).

Belongs to the UPF0502 family.

The polypeptide is UPF0502 protein XAC4278 (Xanthomonas axonopodis pv. citri (strain 306)).